The primary structure comprises 452 residues: tRNA modification GTPase MnmE (452 aa).

Residues Arg-28, Glu-85, and Lys-124 each coordinate (6S)-5-formyl-5,6,7,8-tetrahydrofolate. In terms of domain architecture, TrmE-type G spans 220–378 (GMNVVLVGRP…LRTELLRAAG (159 aa)). Asn-230 provides a ligand contact to K(+). GTP-binding positions include 230–235 (NVGKSS), 249–255 (TDVAGTT), 274–277 (DTAG), and 359–361 (SAR). Mg(2+) is bound at residue Ser-234. K(+) is bound by residues Thr-249, Val-251, and Thr-254. Mg(2+) is bound at residue Thr-255. Lys-452 contributes to the (6S)-5-formyl-5,6,7,8-tetrahydrofolate binding site.

Belongs to the TRAFAC class TrmE-Era-EngA-EngB-Septin-like GTPase superfamily. TrmE GTPase family. Homodimer. Heterotetramer of two MnmE and two MnmG subunits. It depends on K(+) as a cofactor.

Its subcellular location is the cytoplasm. Functionally, exhibits a very high intrinsic GTPase hydrolysis rate. Involved in the addition of a carboxymethylaminomethyl (cmnm) group at the wobble position (U34) of certain tRNAs, forming tRNA-cmnm(5)s(2)U34. This chain is tRNA modification GTPase MnmE, found in Azoarcus sp. (strain BH72).